A 109-amino-acid chain; its full sequence is Nucleoid-associated protein plu3840 (109 aa).

Disordered regions lie at residues 1 to 23 and 89 to 109; these read MFGK…KMQK and KEKM…KMPF.

It belongs to the YbaB/EbfC family. In terms of assembly, homodimer.

Its subcellular location is the cytoplasm. It localises to the nucleoid. Binds to DNA and alters its conformation. May be involved in regulation of gene expression, nucleoid organization and DNA protection. The protein is Nucleoid-associated protein plu3840 of Photorhabdus laumondii subsp. laumondii (strain DSM 15139 / CIP 105565 / TT01) (Photorhabdus luminescens subsp. laumondii).